Here is a 219-residue protein sequence, read N- to C-terminus: Flagellin A (219 aa).

Residues 1–12 (MKVKEFMNNKKG) constitute a propeptide that is removed on maturation. 2 N-linked (GlcNAc...) asparagine glycosylation sites follow: Asn38 and Asn175.

The protein belongs to the archaeal flagellin family. Post-translationally, N-linked glycans consist of the 779 Da trisaccharide beta-ManNAc(Thr)-(1-4)-beta-GlcNAc3NAcA-(1-3)-beta-GlcNAc.

Its subcellular location is the archaeal flagellum. Its function is as follows. Flagellin is the subunit protein which polymerizes to form the filaments of archaeal flagella. This Methanococcus voltae protein is Flagellin A (flaA).